We begin with the raw amino-acid sequence, 356 residues long: MSTIVQRQKEFNFFDLWDSFCAWITSTENRIYIGWFGVLSIPTLLAATTCFVLAFIAAPSVDMDGIREPIMGSLMDGNNLITAAVVPTSAAIGLHFYPIWEAASMDEWLYNGGPYQLIVLHFLIGIWCLLGRFWELSYRLGMRPWIAVAYSAPVIAATSVLLVYPIGQGSFSDGLPLGIAGTFHFMLAFQGDHNILMHPFHMLGVAGVFGGALLSSLHGSLVASTLIRNTDENESINGGYKLGQQQVTYKYLAGHNSFLGRLLIPTFASRNHRAFHFLLAALPTIGIWFAAMGVCSMAFNLNGLNFNHSILDSRGNVIRSDADILNRANIGLSVMHAPNVHNFPLVLSSGQPIPVS.

A run of 3 helical transmembrane segments spans residues 32-49 (YIGWFGVLSIPTLLAATT), 121-136 (HFLIGIWCLLGRFWEL), and 145-159 (WIAVAYSAPVIAATS). Position 121 (histidine 121) interacts with chlorophyll a. [CaMn4O5] cluster is bound by residues aspartate 173 and aspartate 192. A helical membrane pass occupies residues 200–221 (FHMLGVAGVFGGALLSSLHGSL). Chlorophyll a is bound at residue histidine 201. Position 218 (histidine 218) interacts with a quinone. Fe cation-binding residues include histidine 218 and histidine 276. The chain crosses the membrane as a helical span at residues 278-292 (LLAALPTIGIWFAAM). Histidine 336 serves as a coordination point for [CaMn4O5] cluster.

This sequence belongs to the reaction center PufL/M/PsbA/D family. In terms of assembly, PSII is composed of 1 copy each of membrane proteins PsbA, PsbB, PsbC, PsbD, PsbE, PsbF, PsbH, PsbI, PsbJ, PsbK, PsbL, PsbM, PsbT, PsbX, PsbY, PsbZ, Psb30/Ycf12, peripheral proteins PsbO, CyanoQ (PsbQ), PsbU, PsbV and a large number of cofactors. It forms dimeric complexes. The cofactor is The D1/D2 heterodimer binds P680, chlorophylls that are the primary electron donor of PSII, and subsequent electron acceptors. It shares a non-heme iron and each subunit binds pheophytin, quinone, additional chlorophylls, carotenoids and lipids. D1 provides most of the ligands for the Mn4-Ca-O5 cluster of the oxygen-evolving complex (OEC). There is also a Cl(-1) ion associated with D1 and D2, which is required for oxygen evolution. The PSII complex binds additional chlorophylls, carotenoids and specific lipids.. Post-translationally, tyr-164 forms a radical intermediate that is referred to as redox-active TyrZ, YZ or Y-Z.

It localises to the cellular thylakoid membrane. It carries out the reaction 2 a plastoquinone + 4 hnu + 2 H2O = 2 a plastoquinol + O2. Its function is as follows. Photosystem II (PSII) is a light-driven water:plastoquinone oxidoreductase that uses light energy to abstract electrons from H(2)O, generating O(2) and a proton gradient subsequently used for ATP formation. It consists of a core antenna complex that captures photons, and an electron transfer chain that converts photonic excitation into a charge separation. The D1/D2 (PsbA/PsbD) reaction center heterodimer binds P680, the primary electron donor of PSII as well as several subsequent electron acceptors. The polypeptide is Photosystem II protein D1 4 (Trichormus variabilis (strain ATCC 29413 / PCC 7937) (Anabaena variabilis)).